A 532-amino-acid polypeptide reads, in one-letter code: Protein FAM227B (532 aa).

Residues 432-482 adopt a coiled-coil conformation; it reads DNKKDFKRVKQRIKDDIKFLREQQELIDKELDRIQAKASKNLQEVKNEFEN. A disordered region spans residues 494-532; sequence KEEYGGSTSASESPQSMQSPQSSSSFPTISEDFNNVEEG. Low complexity predominate over residues 500–523; sequence STSASESPQSMQSPQSSSSFPTIS.

Belongs to the FAM227 family.

This Mus musculus (Mouse) protein is Protein FAM227B (Fam227b).